Consider the following 284-residue polypeptide: RAD52 motif-containing protein 1 (284 aa).

The necessary for nuclear localization and for nucleolar accumulation in response to heat shock stretch occupies residues 1–92 (MAELVPFAVP…KQLFQKSPVK (92 aa)). The region spanning 15–98 (KTLLVWELSS…SPVKVRLGTR (84 aa)) is the RRM domain. Positions 90–133 (PVKVRLGTRHKAVQHQALALNSSRCQELANYYFGFNGWSKRIIK) are necessary for nuclear and nucleolar localization.

As to quaternary structure, homodimer.

Its subcellular location is the nucleus. It localises to the cytoplasm. It is found in the nucleolus. The protein resides in the cajal body. The protein localises to the PML body. May confer resistance to the antitumor agent cisplatin. Binds to DNA and RNA. This chain is RAD52 motif-containing protein 1 (RDM1), found in Macaca fascicularis (Crab-eating macaque).